The chain runs to 428 residues: Adenylosuccinate synthetase 1 (428 aa).

Residues 12-18 (GDEGKGK) and 40-42 (GHT) each bind GTP. The active-site Proton acceptor is the Asp13. Residues Asp13 and Gly40 each coordinate Mg(2+). IMP contacts are provided by residues 13-16 (DEGK), 38-41 (NAGH), Thr133, Arg147, Asn224, Thr239, and Arg303. Residue His41 is the Proton donor of the active site. Position 299-305 (299-305 (TTTGRRR)) interacts with substrate. Residues Arg305, 331-333 (KLD), and 413-415 (GVG) contribute to the GTP site.

The protein belongs to the adenylosuccinate synthetase family. In terms of assembly, homodimer. The cofactor is Mg(2+).

The protein resides in the cytoplasm. It carries out the reaction IMP + L-aspartate + GTP = N(6)-(1,2-dicarboxyethyl)-AMP + GDP + phosphate + 2 H(+). Its pathway is purine metabolism; AMP biosynthesis via de novo pathway; AMP from IMP: step 1/2. Functionally, plays an important role in the de novo pathway and in the salvage pathway of purine nucleotide biosynthesis. Catalyzes the first committed step in the biosynthesis of AMP from IMP. This chain is Adenylosuccinate synthetase 1, found in Laccaria bicolor (strain S238N-H82 / ATCC MYA-4686) (Bicoloured deceiver).